The sequence spans 263 residues: Proteasome subunit beta type-4 (263 aa).

Position 1 is an N-acetylmethionine (Met-1). Residues 1 to 44 (MEAFWESRTGHWAGGPAPGQFYRVPSTPSCLMDPMSAPARPITR) constitute a propeptide that is removed on maturation. Ser-26 bears the Phosphoserine mark. Tyr-101 carries the post-translational modification Phosphotyrosine.

It belongs to the peptidase T1B family. In terms of assembly, the 26S proteasome consists of a 20S proteasome core and two 19S regulatory subunits. The 20S proteasome core is a barrel-shaped complex made of 28 subunits that are arranged in four stacked rings. The two outer rings are each formed by seven alpha subunits, and the two inner rings are formed by seven beta subunits. The proteolytic activity is exerted by three beta-subunits PSMB5, PSMB6 and PSMB7. Forms a ternary complex with SMAD1 and OAZ1 before PSMB4 is incorporated into the 20S proteasome. Interacts with PRPF19.

It localises to the cytoplasm. The protein localises to the nucleus. In terms of biological role, non-catalytic component of the 20S core proteasome complex involved in the proteolytic degradation of most intracellular proteins. This complex plays numerous essential roles within the cell by associating with different regulatory particles. Associated with two 19S regulatory particles, forms the 26S proteasome and thus participates in the ATP-dependent degradation of ubiquitinated proteins. The 26S proteasome plays a key role in the maintenance of protein homeostasis by removing misfolded or damaged proteins that could impair cellular functions, and by removing proteins whose functions are no longer required. Associated with the PA200 or PA28, the 20S proteasome mediates ubiquitin-independent protein degradation. This type of proteolysis is required in several pathways including spermatogenesis (20S-PA200 complex) or generation of a subset of MHC class I-presented antigenic peptides (20S-PA28 complex). SMAD1/OAZ1/PSMB4 complex mediates the degradation of the CREBBP/EP300 repressor SNIP1. The protein is Proteasome subunit beta type-4 (Psmb4) of Rattus norvegicus (Rat).